Here is a 216-residue protein sequence, read N- to C-terminus: Cytidylate kinase (216 aa).

7-15 (GPSGTGKST) contributes to the ATP binding site.

Belongs to the cytidylate kinase family. Type 1 subfamily.

Its subcellular location is the cytoplasm. It catalyses the reaction CMP + ATP = CDP + ADP. It carries out the reaction dCMP + ATP = dCDP + ADP. The chain is Cytidylate kinase from Chlamydia pneumoniae (Chlamydophila pneumoniae).